Here is a 1016-residue protein sequence, read N- to C-terminus: Mastermind-like protein 1 (1016 aa).

Residues 1-123 are required for interaction with NOTCH proteins; that stretch reads MVLPTCPMAE…NLDSATSPQN (123 aa). S45 carries the post-translational modification Phosphoserine. 5 disordered regions span residues 65–184, 263–487, 561–617, 658–681, and 796–953; these read QAKA…LGLD, PDED…PSHV, KPKP…SQQQ, EKQQ…QGSF, and AYGQ…GGRA. The span at 67–76 shows a compositional bias: basic residues; that stretch reads KAKRAGKHRQ. Over residues 93–115 the composition is skewed to basic and acidic residues; it reads DAADGPEHGRPATHLHDTVKRNL. Residues 116-129 show a composition bias toward polar residues; sequence DSATSPQNGDQQNG. S120 is modified (phosphoserine). Positions 263 to 282 are enriched in basic and acidic residues; that stretch reads PDEDMKDLFNEDFEEKKDPE. The span at 283 to 292 shows a compositional bias: polar residues; that stretch reads SSGSATQTPL. 2 positions are modified to phosphoserine: S303 and S314. Residues 322–353 are compositionally biased toward polar residues; that stretch reads AGQTFLGPSSAPVSTDSPSLGGSQTLFHTSGQ. Position 360 is a phosphoserine (S360). A compositionally biased stretch (polar residues) spans 392-403; sequence ELSSAHQLQQIA. Over residues 413 to 426 the composition is skewed to low complexity; the sequence is QNPQQATPAPAPGQ. Polar residues-rich tracts occupy residues 427–439, 451–463, 577–595, and 602–617; these read MSTW…SHSS, SPSS…TNSK, QEQN…SVGT, and VASS…SQQQ. The span at 801 to 810 shows a compositional bias: low complexity; sequence SLGSSGLSQQ. An N6-acetyllysine modification is found at K822. The segment covering 834–885 has biased composition (polar residues); it reads GQNSSWQHQGMPNLSGQTPGNSNVSPFTAASSFHMQQQAHLKMSSPQFSQAV. Phosphoserine is present on S1015.

This sequence belongs to the mastermind family. In terms of assembly, interacts (via N-terminus) with NOTCH1, NOTCH2, NOTCH3 and NOTCH4 (via ankyrin repeat region). Interacts (via N-terminus) with p53 (via DNA-binding region). Forms a DNA-binding complex with Notch proteins and RBPSUH/RBP-J kappa/CBF1. Also binds CREBBP/CBP and CDK8. Forms a complex with PRAG1, NOTCH1 and MAML1, in a MAML1-dependent manner. Widely expressed with highest levels in heart, pancreas, peripheral blood leukocytes and spleen.

The protein localises to the nucleus speckle. In terms of biological role, acts as a transcriptional coactivator for NOTCH proteins. Has been shown to amplify NOTCH-induced transcription of HES1. Enhances phosphorylation and proteolytic turnover of the NOTCH intracellular domain in the nucleus through interaction with CDK8. Binds to CREBBP/CBP which promotes nucleosome acetylation at NOTCH enhancers and activates transcription. Induces phosphorylation and localization of CREBBP to nuclear foci. Plays a role in hematopoietic development by regulating NOTCH-mediated lymphoid cell fate decisions. The chain is Mastermind-like protein 1 from Homo sapiens (Human).